Consider the following 206-residue polypeptide: Large ribosomal subunit protein uL4 (206 aa).

Positions 47-77 are disordered; the sequence is GTHDTKTRGEVSGGGRKPWRQKGTGRARHGS. The segment covering 63–77 has biased composition (basic residues); that stretch reads KPWRQKGTGRARHGS.

The protein belongs to the universal ribosomal protein uL4 family. As to quaternary structure, part of the 50S ribosomal subunit.

Functionally, one of the primary rRNA binding proteins, this protein initially binds near the 5'-end of the 23S rRNA. It is important during the early stages of 50S assembly. It makes multiple contacts with different domains of the 23S rRNA in the assembled 50S subunit and ribosome. Its function is as follows. Forms part of the polypeptide exit tunnel. The chain is Large ribosomal subunit protein uL4 from Carboxydothermus hydrogenoformans (strain ATCC BAA-161 / DSM 6008 / Z-2901).